The primary structure comprises 254 residues: Small ribosomal subunit protein uS2 (254 aa).

Belongs to the universal ribosomal protein uS2 family.

In Borrelia recurrentis (strain A1), this protein is Small ribosomal subunit protein uS2.